Consider the following 98-residue polypeptide: NADH-ubiquinone oxidoreductase chain 4L (98 aa).

3 helical membrane passes run 1–21 (MTPT…GMLI), 29–49 (SLLC…LIAL), and 61–81 (IILL…LVSI).

This sequence belongs to the complex I subunit 4L family. As to quaternary structure, core subunit of respiratory chain NADH dehydrogenase (Complex I) which is composed of 45 different subunits.

It is found in the mitochondrion inner membrane. The catalysed reaction is a ubiquinone + NADH + 5 H(+)(in) = a ubiquinol + NAD(+) + 4 H(+)(out). In terms of biological role, core subunit of the mitochondrial membrane respiratory chain NADH dehydrogenase (Complex I) which catalyzes electron transfer from NADH through the respiratory chain, using ubiquinone as an electron acceptor. Part of the enzyme membrane arm which is embedded in the lipid bilayer and involved in proton translocation. This is NADH-ubiquinone oxidoreductase chain 4L (MT-ND4L) from Macaca maura (Moor macaque).